Reading from the N-terminus, the 120-residue chain is Ribonuclease P protein component (120 aa).

This sequence belongs to the RnpA family. As to quaternary structure, consists of a catalytic RNA component (M1 or rnpB) and a protein subunit.

The enzyme catalyses Endonucleolytic cleavage of RNA, removing 5'-extranucleotides from tRNA precursor.. Functionally, RNaseP catalyzes the removal of the 5'-leader sequence from pre-tRNA to produce the mature 5'-terminus. It can also cleave other RNA substrates such as 4.5S RNA. The protein component plays an auxiliary but essential role in vivo by binding to the 5'-leader sequence and broadening the substrate specificity of the ribozyme. The chain is Ribonuclease P protein component from Chlamydia trachomatis serovar D (strain ATCC VR-885 / DSM 19411 / UW-3/Cx).